We begin with the raw amino-acid sequence, 261 residues long: uncharacterized protein (261 aa).

It belongs to the BtpA family.

This is an uncharacterized protein from Thermococcus kodakarensis (strain ATCC BAA-918 / JCM 12380 / KOD1) (Pyrococcus kodakaraensis (strain KOD1)).